Here is a 581-residue protein sequence, read N- to C-terminus: MSAFELVTELSARFKDAVLGEQMTADRFPTVWIRPDATIDVHRFLRQEIDRPFKMLVDLWAIDETARKHRDGLPPSGITIASHLMSHERNADIRIKIALDAEYPRAKSIGSVFPNAPWYEREAYDMFGVEFEAQPHSLRILLPPGWEGHPMRKTQPGRATERPLFNMTASLFDAKEHALAADPEKFGLPTHRDGVELMILNYGPHSMATHGVFRIVLALDGEEIVAARPDIGFHHRGAEKMAERQTWHNFLPYTDRVDYLGGVMGEMPYLQAVEKACGIKVPDRALTVRIMLSEMFRIMNHLLFYGTMAQDTGAMSPVFYMFTDRERGYRVIESITGARMHPGFFRIGGLSMDLPDGWDRLVREFLDWMPSRLDDYEGMVLRNEIFRARTKGIAAYDTAMALDWGVTGPGLRATGYAWDVRKARPYAGFENFDFEIPVGHAGDCYDRTVVRVEEIRQSLKIIRQCVDNMPSGPIKADHPLTTPPPRERMLHDIETMIHHFVSTSWGPVLPPGEYTGQVETVRGLTQFALISDGEPSSYRTRIRTPSFAHLQMISAVAPGMMVADLVAYLGSIDYVMSDVDR.

Residues 1-172 are NADH dehydrogenase I subunit C; sequence MSAFELVTEL…PLFNMTASLF (172 aa). An NADH dehydrogenase I subunit D region spans residues 196 to 581; the sequence is ELMILNYGPH…IDYVMSDVDR (386 aa).

In the N-terminal section; belongs to the complex I 30 kDa subunit family. The protein in the C-terminal section; belongs to the complex I 49 kDa subunit family. NDH-1 is composed of 13 different subunits. Subunits NuoB, CD, E, F, and G constitute the peripheral sector of the complex.

It is found in the cell inner membrane. It catalyses the reaction a quinone + NADH + 5 H(+)(in) = a quinol + NAD(+) + 4 H(+)(out). Functionally, NDH-1 shuttles electrons from NADH, via FMN and iron-sulfur (Fe-S) centers, to quinones in the respiratory chain. The immediate electron acceptor for the enzyme in this species is believed to be ubiquinone. Couples the redox reaction to proton translocation (for every two electrons transferred, four hydrogen ions are translocated across the cytoplasmic membrane), and thus conserves the redox energy in a proton gradient. This chain is NADH-quinone oxidoreductase subunit C/D, found in Rhodopseudomonas palustris (strain ATCC BAA-98 / CGA009).